Reading from the N-terminus, the 111-residue chain is Large ribosomal subunit protein uL24 (111 aa).

It belongs to the universal ribosomal protein uL24 family. In terms of assembly, part of the 50S ribosomal subunit.

Its function is as follows. One of two assembly initiator proteins, it binds directly to the 5'-end of the 23S rRNA, where it nucleates assembly of the 50S subunit. Functionally, one of the proteins that surrounds the polypeptide exit tunnel on the outside of the subunit. The polypeptide is Large ribosomal subunit protein uL24 (Myxococcus xanthus (strain DK1622)).